Consider the following 151-residue polypeptide: Deoxyuridine 5'-triphosphate nucleotidohydrolase (151 aa).

Residues 70 to 72 (RSG), Asn-83, 87 to 89 (LID), and Met-97 contribute to the substrate site.

It belongs to the dUTPase family. Mg(2+) is required as a cofactor.

It catalyses the reaction dUTP + H2O = dUMP + diphosphate + H(+). It functions in the pathway pyrimidine metabolism; dUMP biosynthesis; dUMP from dCTP (dUTP route): step 2/2. In terms of biological role, this enzyme is involved in nucleotide metabolism: it produces dUMP, the immediate precursor of thymidine nucleotides and it decreases the intracellular concentration of dUTP so that uracil cannot be incorporated into DNA. The polypeptide is Deoxyuridine 5'-triphosphate nucleotidohydrolase (Pseudomonas syringae pv. tomato (strain ATCC BAA-871 / DC3000)).